The primary structure comprises 137 residues: Histone H2B (137 aa).

Basic and acidic residues predominate over residues 1–10 (MPPKPADKKP). The interval 1–45 (MPPKPADKKPASKAPATASKAPEKKDAGKKTAASGDKKKRTKARK) is disordered. An N6-acetyllysine; alternate mark is found at Lys-8 and Lys-9. Glycyl lysine isopeptide (Lys-Gly) (interchain with G-Cter in SUMO); alternate cross-links involve residues Lys-8 and Lys-9. A Phosphoserine modification is found at Ser-12. Lys-13 carries the N6-acetyllysine modification. Position 24 is an N6-acetyllysine; alternate (Lys-24). Lys-24 is covalently cross-linked (Glycyl lysine isopeptide (Lys-Gly) (interchain with G-Cter in SUMO); alternate). A Glycyl lysine isopeptide (Lys-Gly) (interchain with G-Cter in SUMO) cross-link involves residue Lys-25. A Glycyl lysine isopeptide (Lys-Gly) (interchain with G-Cter in ubiquitin) cross-link involves residue Lys-131.

The protein belongs to the histone H2B family. The nucleosome is a histone octamer containing two molecules each of H2A, H2B, H3 and H4 assembled in one H3-H4 heterotetramer and two H2A-H2B heterodimers. The octamer wraps approximately 147 bp of DNA. Post-translationally, monoubiquitinated by the ubc-2-bre-1 complex to form H2BK123ub1. H2BK123ub1 gives a specific tag for epigenetic transcriptional activation and is also prerequisite for H3K4me and H3K79me formation. H2BK123ub1 also modulates the formation of double-strand breaks during meiosis and is a prerequisite for DNA-damage checkpoint activation. Phosphorylated by ste-20 to form H2BS10ph during progression through meiotic prophase. May be correlated with chromosome condensation. In terms of processing, acetylated by gcn-5 to form H2BK11ac and H2BK16ac. H2BK16ac can also be formed by esa-1. Acetylation of N-terminal lysines and particularly formation of H2BK11acK16ac has a positive effect on transcription. Post-translationally, sumoylation to form H2BK6su or H2BK7su, and probably also H2BK16su or H2BK17su, occurs preferentially near the telomeres and represses gene transcription.

The protein localises to the nucleus. It is found in the chromosome. Core component of nucleosome. Nucleosomes wrap and compact DNA into chromatin, limiting DNA accessibility to the cellular machineries which require DNA as a template. Histones thereby play a central role in transcription regulation, DNA repair, DNA replication and chromosomal stability. DNA accessibility is regulated via a complex set of post-translational modifications of histones, also called histone code, and nucleosome remodeling. This Neurospora crassa (strain ATCC 24698 / 74-OR23-1A / CBS 708.71 / DSM 1257 / FGSC 987) protein is Histone H2B (hh2b).